The sequence spans 67 residues: Large ribosomal subunit protein bL35 (67 aa).

This sequence belongs to the bacterial ribosomal protein bL35 family.

This Rhizobium johnstonii (strain DSM 114642 / LMG 32736 / 3841) (Rhizobium leguminosarum bv. viciae) protein is Large ribosomal subunit protein bL35.